We begin with the raw amino-acid sequence, 674 residues long: L-type lectin-domain containing receptor kinase IV.3 (674 aa).

An N-terminal signal peptide occupies residues M1–S22. 6 N-linked (GlcNAc...) asparagine glycosylation sites follow: N21, N28, N40, N81, N136, and N188. Topologically, residues S23–R296 are extracellular. Residues S26 to F263 form a legume-lectin like region. A helical membrane pass occupies residues M297–V317. The Cytoplasmic portion of the chain corresponds to R318 to R674. In terms of domain architecture, Protein kinase spans F355–L632. ATP contacts are provided by residues L361–V369 and K384. D480 serves as the catalytic Proton acceptor.

The protein in the C-terminal section; belongs to the protein kinase superfamily. Ser/Thr protein kinase family. It in the N-terminal section; belongs to the leguminous lectin family.

It is found in the cell membrane. It catalyses the reaction L-seryl-[protein] + ATP = O-phospho-L-seryl-[protein] + ADP + H(+). The enzyme catalyses L-threonyl-[protein] + ATP = O-phospho-L-threonyl-[protein] + ADP + H(+). This chain is L-type lectin-domain containing receptor kinase IV.3 (LECRK43), found in Arabidopsis thaliana (Mouse-ear cress).